The following is an 830-amino-acid chain: Vacuolar protein sorting-associated protein 11 homolog (830 aa).

The RING-type; atypical zinc-finger motif lies at 733 to 775; the sequence is CDICREMLSMQSIYFLCQHSFHEECLNYKSTKRQEKFLCIICK.

The protein belongs to the VPS11 family. Part of the homotypic fusion and vacuole protein sorting (HOPS) complex, composed of Vps16A, car/Vps33A, dor/Vps18, Vps39, Vps11 and lt/Vps41. Unlike in other species, not part of the class C core vacuole/endosome tethering (CORVET) complex.

Its subcellular location is the late endosome membrane. It is found in the lysosome membrane. Part of the homotypic fusion and vacuole protein sorting (HOPS) tethering complex involved in endo-lysosomal vesicle trafficking and lysosome biogenesis, but unlike in many other species does not form part of the class C core vacuole/endosome tethering (CORVET) complex. The HOPS complex facilitates docking and fusion of lysosomes with late endosomes and several other types of vesicles. The HOPS complex is also involved in autophagy, pigment granule biogenesis and crinophagy (the elimination of unused secretory granules through fusion with lysosomes). The HOPS complex probably instigates autophagosome-lysosome fusion by binding autophagosome-associated Syx17/syntaxin 17 and promoting assembly of the trans-SNARE complex. Independent of Syx17/syntaxin 17, HOPS is involved in biosynthetic transport to lysosomes and lysosome-related organelles such as eye-pigment granules. Required for autophagocytosis-dependent remodeling of myofibrils and transverse-tubules (T-tubules) during metamorphosis. The chain is Vacuolar protein sorting-associated protein 11 homolog from Drosophila melanogaster (Fruit fly).